The chain runs to 314 residues: Methionyl-tRNA formyltransferase (314 aa).

110–113 is a binding site for (6S)-5,6,7,8-tetrahydrofolate; the sequence is SLLP.

This sequence belongs to the Fmt family.

The catalysed reaction is L-methionyl-tRNA(fMet) + (6R)-10-formyltetrahydrofolate = N-formyl-L-methionyl-tRNA(fMet) + (6S)-5,6,7,8-tetrahydrofolate + H(+). Functionally, attaches a formyl group to the free amino group of methionyl-tRNA(fMet). The formyl group appears to play a dual role in the initiator identity of N-formylmethionyl-tRNA by promoting its recognition by IF2 and preventing the misappropriation of this tRNA by the elongation apparatus. This Bacillus mycoides (strain KBAB4) (Bacillus weihenstephanensis) protein is Methionyl-tRNA formyltransferase.